Consider the following 406-residue polypeptide: Type II secretion system protein F (406 aa).

Residues 1–171 (MAAFEYKALD…KMRSKLQQAM (171 aa)) lie on the Cytoplasmic side of the membrane. Ca(2+) is bound by residues Glu-97, Glu-151, and Asp-155. Residues 172–192 (IYPVVLVVFAVGIVAFLLAAV) traverse the membrane as a helical segment. Residues 193–223 (VPKIVGQFVQMGQALPASTQFLLDASDFLQH) are Periplasmic-facing. The helical transmembrane segment at 224–244 (WGISLLVGLLMLIYLVRWLLT) threads the bilayer. The Cytoplasmic portion of the chain corresponds to 245 to 368 (KPDIRLRWDR…QDNSFESTVN (124 aa)). A helical membrane pass occupies residues 369–389 (IALGIFTPALIALMAGMVLFI). The Periplasmic segment spans residues 390–406 (VMATLMPILEMNNLMSR).

This sequence belongs to the GSP F family. In terms of assembly, type II secretion system is composed of four main components: the outer membrane complex, the inner membrane complex, the cytoplasmic secretion ATPase and the periplasm-spanning pseudopilus. Homodimer. Interacts with EpsE/GspE and EpsL/GspL components.

It is found in the cell inner membrane. Functionally, component of the type II secretion system inner membrane complex required for the energy-dependent secretion of extracellular factors such as proteases and toxins from the periplasm. In Vibrio cholerae serotype O1 (strain ATCC 39315 / El Tor Inaba N16961), this protein is Type II secretion system protein F (epsF).